We begin with the raw amino-acid sequence, 75 residues long: UPF0512 protein C (75 aa).

This sequence belongs to the UPF0512 family.

This is UPF0512 protein C from Dictyostelium discoideum (Social amoeba).